A 281-amino-acid chain; its full sequence is Large ribosomal subunit protein uL2 (281 aa).

A disordered region spans residues 210-281 (RTRYAGQRPH…RGRKRGPHTR (72 aa)). Basic residues predominate over residues 254–281 (TVGKKTRSHKARSNKFIVRGRKRGPHTR).

It belongs to the universal ribosomal protein uL2 family. In terms of assembly, part of the 50S ribosomal subunit. Forms a bridge to the 30S subunit in the 70S ribosome.

Its function is as follows. One of the primary rRNA binding proteins. Required for association of the 30S and 50S subunits to form the 70S ribosome, for tRNA binding and peptide bond formation. It has been suggested to have peptidyltransferase activity; this is somewhat controversial. Makes several contacts with the 16S rRNA in the 70S ribosome. This chain is Large ribosomal subunit protein uL2, found in Limosilactobacillus reuteri subsp. reuteri (strain JCM 1112) (Lactobacillus reuteri).